The chain runs to 505 residues: tRNA (guanine(6)-N(2))-methyltransferase THUMP3 (505 aa).

The tract at residues 145–182 is disordered; sequence KAKRRKANQSAGKEKADCGQGDKADEKDGKKKHASSTS. Residues 156 to 173 show a composition bias toward basic and acidic residues; that stretch reads GKEKADCGQGDKADEKDG. The region spanning 171–287 is the THUMP domain; sequence KDGKKKHASS…DNEVIVAIAL (117 aa).

The protein belongs to the methyltransferase superfamily. As to quaternary structure, part of the heterodimeric THUMPD3-TRM112 methyltransferase complex; this complex forms an active tRNA methyltransferase, where TRMT112 acts as an activator of the catalytic subunit THUMPD3. Ubiquitously expressed. Abundantly expressed in the testis, also expressed in the brain, heart, kidney, liver, lung, muscle and spleen.

The protein localises to the cytoplasm. It carries out the reaction guanosine(6) in tRNA + S-adenosyl-L-methionine = N(2)-methylguanosine(6) in tRNA + S-adenosyl-L-homocysteine + H(+). The enzyme catalyses guanosine(7) in tRNA + S-adenosyl-L-methionine = N(2)-methylguanosine(7) in tRNA + S-adenosyl-L-homocysteine + H(+). Catalytic subunit of the THUMPD3-TRM112 methyltransferase complex, that specifically mediates the S-adenosyl-L-methionine-dependent N(2)-methylation of guanosine nucleotide at position 6 (m2G6) in tRNAs. This is one of the major tRNA (guanine-N(2))-methyltransferases. Also catalyzes the S-adenosyl-L-methionine-dependent N(2)-methylation of guanosine nucleotide at position 7 of tRNA(Trp). The sequence is that of tRNA (guanine(6)-N(2))-methyltransferase THUMP3 from Mus musculus (Mouse).